Here is a 477-residue protein sequence, read N- to C-terminus: MTEKFLFLYLSLLPMPLLSQAQWNENSLVSFSKIIASGNHLSNCWICHNFITRSSSYQYILVRNFSLNLTFGSGIPEGQHKSVPLQVSLANSAHQVPCLDLTPPFNQSSKTSFYFYNCSSLNQTCCPCPEGHCDRKNTSEEGFPSPTIHPMSFSPAGCHPNLTHWCPAKQMNDYRDKSPQNRCAAWEGKELITWRVLYLLPKAHTVPTWPKSTVPLGGPLSPACNQTIPAGWKSQLHKWFDSHIPRWACTPPGYVFLCGPQKNKLPFDGSPKITYSTPPVANLYTCINNIQHTGECAVGLLGPRGIGVTIYNTTQPRQKRALGLILAGMGAAIGMIAPWGGFTYHDVTLRNLSRQIDNIAKSTRDSISKLKASIDSLANVVMNNRLALDYLLAEQGGVCAVISKSCCIYVNNSGAIEEDIKKIYDEVTWLHNFGKGDSAGSIWEAVKSALPSLTWFVPLLGPAALNSLLSPLWPLSL.

Residues 1–21 (MTEKFLFLYLSLLPMPLLSQA) form the signal peptide. At 22-321 (QWNENSLVSF…NTTQPRQKRA (300 aa)) the chain is on the extracellular side. The N-linked (GlcNAc...) asparagine glycan is linked to N68. The chain crosses the membrane as a helical span at residues 322-342 (LGLILAGMGAAIGMIAPWGGF). Residues 343-477 (TYHDVTLRNL…LLSPLWPLSL (135 aa)) lie on the Cytoplasmic side of the membrane.

This sequence belongs to the gamma type-C retroviral envelope protein family. As to expression, expressed in placenta.

Its subcellular location is the membrane. The sequence is that of Endogenous retrovirus group V member 1 Env polyprotein (ERVV-1) from Homo sapiens (Human).